The chain runs to 61 residues: Potassium channel toxin kappa-KTx 2.8 (61 aa).

Residues 1 to 21 (GTVYVFLLLLAFGIFTDISNA) form the signal peptide. Positions 22–35 (CSEQMDDEDSYEVE) are excised as a propeptide. Cystine bridges form between C41–C59 and C45–C55.

The protein belongs to the short scorpion toxin superfamily. Potassium channel inhibitor kappa-KTx family. Kappa-KTx 2 subfamily. As to expression, expressed by the venom gland.

The protein resides in the secreted. In terms of biological role, voltage-gated potassium channel inhibitor (Kv) that acts on Kv1.3/KCNA3 and Kv7.1/KCNQ1. 1 uM of the toxin inhibits Kv1.3/KCNA3 currents by 35.1%, whereas 10 uM of the toxin inhibits Kv7.1/KCNQ1 currents by 44.9%. The sequence is that of Potassium channel toxin kappa-KTx 2.8 from Heterometrus petersii (Asian forest scorpion).